Here is a 249-residue protein sequence, read N- to C-terminus: Major phosphate-irrepressible acid phosphatase (249 aa).

Positions 1-20 are cleaved as a signal peptide; it reads MKKNIIAGCLFSLFSLSALA.

It belongs to the class A bacterial acid phosphatase family. In terms of assembly, homotetramer.

The protein localises to the periplasm. It carries out the reaction a phosphate monoester + H2O = an alcohol + phosphate. In Morganella morganii (Proteus morganii), this protein is Major phosphate-irrepressible acid phosphatase (phoC).